A 1450-amino-acid polypeptide reads, in one-letter code: Protein clueless (1450 aa).

Disordered stretches follow at residues 1-126 (MALE…PGSE) and 266-287 (KTRP…VSEP). Residues 29-60 (NNSSAGKKQQQQQQPNQNQNLVNGNGNAADGP) are compositionally biased toward low complexity. Residues 62–71 (AKKKGKKNRN) show a composition bias toward basic residues. Phosphoserine is present on Ser-271. The region spanning 425-667 (RAEDAFSSKL…RTFPPDVNFL (243 aa)) is the Clu domain. Composition is skewed to basic and acidic residues over residues 725 to 734 (KQSEKTEEKA) and 743 to 765 (KESS…EEKQ). 2 disordered regions span residues 725-775 (KQSE…TKTA) and 959-1011 (PAVS…SDWT). Over residues 968–983 (KKRSNGNKHNKHKSKG) the composition is skewed to basic residues. The segment covering 984–1008 (NKQQASGNQNGSSAGSSSGGSSSSS) has biased composition (low complexity). 3 TPR repeats span residues 1102 to 1135 (AYNF…LNNV), 1228 to 1261 (ALID…NIKY), and 1263 to 1296 (GSKA…EKET). The interval 1410-1450 (NNNGDTEAETKDATKDNKDLAGASTQLTNGDKDAETAVASS) is disordered. Residues 1417–1428 (AETKDATKDNKD) show a composition bias toward basic and acidic residues.

The protein belongs to the CLU family.

The protein resides in the cytoplasm. MRNA-binding protein involved in proper cytoplasmic distribution of mitochondria. In Drosophila ananassae (Fruit fly), this protein is Protein clueless.